Consider the following 290-residue polypeptide: Acetyl-coenzyme A carboxylase carboxyl transferase subunit beta (290 aa).

A CoA carboxyltransferase N-terminal domain is found at 28–290 (VMTKCPQCKK…KGGEEGWWRN (263 aa)). Residues C32, C35, C51, and C54 each coordinate Zn(2+). A C4-type zinc finger spans residues 32–54 (CPQCKKIMYTKELIKNLRVCLSC).

This sequence belongs to the AccD/PCCB family. As to quaternary structure, acetyl-CoA carboxylase is a heterohexamer composed of biotin carboxyl carrier protein (AccB), biotin carboxylase (AccC) and two subunits each of ACCase subunit alpha (AccA) and ACCase subunit beta (AccD). Requires Zn(2+) as cofactor.

The protein resides in the cytoplasm. The enzyme catalyses N(6)-carboxybiotinyl-L-lysyl-[protein] + acetyl-CoA = N(6)-biotinyl-L-lysyl-[protein] + malonyl-CoA. Its pathway is lipid metabolism; malonyl-CoA biosynthesis; malonyl-CoA from acetyl-CoA: step 1/1. In terms of biological role, component of the acetyl coenzyme A carboxylase (ACC) complex. Biotin carboxylase (BC) catalyzes the carboxylation of biotin on its carrier protein (BCCP) and then the CO(2) group is transferred by the transcarboxylase to acetyl-CoA to form malonyl-CoA. This Geobacillus kaustophilus (strain HTA426) protein is Acetyl-coenzyme A carboxylase carboxyl transferase subunit beta.